The primary structure comprises 131 residues: uncharacterized protein (131 aa).

The interval S101 to P131 is disordered.

This is an uncharacterized protein from Homo sapiens (Human).